Consider the following 779-residue polypeptide: Lysosome membrane protein 2-A (779 aa).

Over 1 to 17 (MVKRGCCHRKMVNHKGC) the chain is Cytoplasmic. The chain crosses the membrane as a helical span at residues 18–38 (LVSGIFLAVIGAVLFILAFAL). Residues 39-732 (LPHLINQTTQ…LLNSQFKLIK (694 aa)) lie on the Lumenal side of the membrane. N-linked (GlcNAc...) asparagine glycosylation is found at asparagine 44, asparagine 86, asparagine 95, asparagine 114, asparagine 117, asparagine 201, asparagine 239, asparagine 262, asparagine 266, asparagine 277, asparagine 369, asparagine 410, asparagine 440, asparagine 508, asparagine 543, asparagine 601, asparagine 619, asparagine 651, and asparagine 693. A helical membrane pass occupies residues 733 to 753 (ILGFVPVIVVSIIGGIILIAG). At 754-779 (ISMFAFGFKKLRQQKQQGYQAIINNE) the chain is on the cytoplasmic side. The Tyrosine-type lysosomal sorting signal motif lies at 771–774 (GYQA).

The protein belongs to the CD36 family. Post-translationally, heavily glycosylated.

The protein resides in the lysosome membrane. In terms of biological role, may act as a lysosomal receptor. May be involved in macropinocytosis and fluid phase exocytosis. Binds to the anionic phospholipid phosphoinositol 4,5-bisphosphate, but not to phosphatidylcholine and only weakly to phosphatidylserine. The sequence is that of Lysosome membrane protein 2-A (lmpA) from Dictyostelium discoideum (Social amoeba).